A 238-amino-acid polypeptide reads, in one-letter code: Probable transcriptional regulatory protein STER_0242 (238 aa).

The protein belongs to the TACO1 family. YeeN subfamily.

It localises to the cytoplasm. The chain is Probable transcriptional regulatory protein STER_0242 from Streptococcus thermophilus (strain ATCC BAA-491 / LMD-9).